The primary structure comprises 156 residues: Nucleosome assembly protein 1-like 5 (156 aa).

Basic and acidic residues predominate over residues 1 to 16; it reads MADPEKQGPAESRAED. The segment at 1–58 is disordered; the sequence is MADPEKQGPAESRAEDEVMEGAQGGEDAATGDSAAAPAAEEPQAPAENAPKPKKDFME. Low complexity predominate over residues 34–49; sequence AAAPAAEEPQAPAENA. Residues 68 to 94 are a coiled coil; it reads VLALKKLQKRCDKIEAKFDKEFQALEK. The segment at 120–156 is disordered; the sequence is TLEGEDDEDDEEEDDEEEEEEEEAAAGATGGPNFAKK. Over residues 122–143 the composition is skewed to acidic residues; that stretch reads EGEDDEDDEEEDDEEEEEEEEA.

Belongs to the nucleosome assembly protein (NAP) family.

The protein resides in the nucleus. The protein is Nucleosome assembly protein 1-like 5 (Nap1l5) of Mus musculus (Mouse).